The primary structure comprises 314 residues: 2,3-dihydroxyphenylpropionate/2,3-dihydroxicinnamic acid 1,2-dioxygenase (314 aa).

The Proton donor role is filled by His-115. Residue His-179 is the Proton acceptor of the active site.

It belongs to the LigB/MhpB extradiol dioxygenase family. Homotetramer. The cofactor is Fe(2+).

It catalyses the reaction 3-(2,3-dihydroxyphenyl)propanoate + O2 = (2Z,4E)-2-hydroxy-6-oxonona-2,4-dienedioate + H(+). The catalysed reaction is (2E)-3-(2,3-dihydroxyphenyl)prop-2-enoate + O2 = (2Z,4E,7E)-2-hydroxy-6-oxonona-2,4,7-trienedioate + H(+). Its pathway is aromatic compound metabolism; 3-phenylpropanoate degradation. Functionally, catalyzes the non-heme iron(II)-dependent oxidative cleavage of 2,3-dihydroxyphenylpropionic acid and 2,3-dihydroxicinnamic acid into 2-hydroxy-6-ketononadienedioate and 2-hydroxy-6-ketononatrienedioate, respectively. In Escherichia coli O81 (strain ED1a), this protein is 2,3-dihydroxyphenylpropionate/2,3-dihydroxicinnamic acid 1,2-dioxygenase.